A 450-amino-acid chain; its full sequence is N-lysine methyltransferase SETD6 (450 aa).

The segment covering 1 to 10 (MATQAKRRRV) has biased composition (basic residues). Positions 1 to 20 (MATQAKRRRVAGPAGSDDDP) are disordered. The SET domain occupies 39–263 (PKVAVSRQGT…KGHEIFNTYG (225 aa)). An N6-methylated lysine; by autocatalysis modification is found at Lys40. 50–52 (AGY) is an S-adenosyl-L-methionine binding site. Trp99 lines the substrate pocket. An N6-methylated lysine; by autocatalysis modification is found at Lys156. Residue Tyr200 participates in S-adenosyl-L-methionine binding. Ser201 and Gln203 together coordinate substrate. S-adenosyl-L-methionine-binding positions include 228–229 (NH) and Tyr274. Position 349 is an N6-methylated lysine; by autocatalysis (Lys349).

Belongs to the class V-like SAM-binding methyltransferase superfamily. Histone-lysine methyltransferase family. SETD6 subfamily. As to quaternary structure, monomer, homodimer and homotrimer; these structures are stabilized in the presence of S-adenosyl-L-methionine (SAM). Automethylated.

The protein resides in the nucleus. It catalyses the reaction L-lysyl-[protein] + S-adenosyl-L-methionine = N(6)-methyl-L-lysyl-[protein] + S-adenosyl-L-homocysteine + H(+). It carries out the reaction L-lysyl(8)-[histone H2AZ] + S-adenosyl-L-methionine = N(6)-methyl-L-lysyl(8)-[histone H2AZ] + S-adenosyl-L-homocysteine + H(+). Protein-lysine N-methyltransferase. Monomethylates 'Lys-310' of the RELA subunit of NF-kappa-B complex, leading to down-regulation of NF-kappa-B transcription factor activity. Monomethylates 'Lys-8' of H2AZ (H2AZK8me1). Required for the maintenance of embryonic stem cell self-renewal. Methylates PAK4. In Bos taurus (Bovine), this protein is N-lysine methyltransferase SETD6 (SETD6).